Reading from the N-terminus, the 986-residue chain is Vacuolar membrane protease (986 aa).

The Cytoplasmic segment spans residues 1 to 20 (MATPRAQKFNPIAFTPGPVT). Residues 21 to 41 (LITTIVYLALLIPILVISLVV) form a helical membrane-spanning segment. Topologically, residues 42–392 (PPAPETSPEG…AFAVFRLHTL (351 aa)) are vacuolar. 3 N-linked (GlcNAc...) asparagine glycosylation sites follow: N53, N116, and N119. The Zn(2+) site is built by H175 and D187. The active-site Proton acceptor is the E221. E222 contacts Zn(2+). N-linked (GlcNAc...) asparagine glycosylation is present at N238. Zn(2+)-binding residues include E247 and H320. A helical transmembrane segment spans residues 393-413 (FALSVTLLIVAPLVIFITAIV). The Cytoplasmic portion of the chain corresponds to 414–447 (LSKTDRMYLFSMSKSLGGTDERVSLRGLRGLFRT). Residues 448–468 (PIILAVATVIPIGLAYLLEKV) traverse the membrane as a helical segment. At 469–477 (NPYIVHSSQ) the chain is on the vacuolar side. A helical membrane pass occupies residues 478–498 (FSVWSMMISVWIFLAWFLACA). Residues 499-509 (ADFFRPSALHR) are Cytoplasmic-facing. Residues 510–530 (AYSYTWIFIATWVMLVINTVY) form a helical membrane-spanning segment. At 531-534 (ANQK) the chain is on the vacuolar side. A helical transmembrane segment spans residues 535-555 (GIAAGYFVFFYFSGSFLATWV). The Cytoplasmic portion of the chain corresponds to 556–665 (SYLELFALPR…WSWTLPRWTW (110 aa)). Positions 595–620 (ELPSDTGPHAEYPGDADETDPTESTS) are disordered. Residues 666-686 (VLQLLLLAPIVLILVGQLALF) traverse the membrane as a helical segment. The Vacuolar segment spans residues 687-702 (LTTSMSQVGSDGVSTF). The helical transmembrane segment at 703 to 723 (IVYLACAVFTTLLFAPLFPFI) threads the bilayer. The Cytoplasmic portion of the chain corresponds to 724–729 (HRFTYH). The chain crosses the membrane as a helical span at residues 730–750 (IPTFLFLVFVGTLIYNLVAFP). Residues 751–986 (FSPANRLKMF…VEASHGITIQ (236 aa)) are Vacuolar-facing. N797, N840, and N948 each carry an N-linked (GlcNAc...) asparagine glycan.

It belongs to the peptidase M28 family. The cofactor is Zn(2+).

It is found in the vacuole membrane. Functionally, may be involved in vacuolar sorting and osmoregulation. This chain is Vacuolar membrane protease, found in Blastomyces gilchristii (strain SLH14081) (Blastomyces dermatitidis).